The chain runs to 137 residues: Basic phospholipase A2 homolog W6D49 (137 aa).

Residues Met1 to Gly16 form the signal peptide. 7 cysteine pairs are disulfide-bonded: Cys42-Cys131, Cys44-Cys60, Cys59-Cys111, Cys65-Cys137, Cys66-Cys104, Cys73-Cys97, and Cys91-Cys102. The tract at residues Lys121–Lys133 is important for membrane-damaging activities in eukaryotes and bacteria; heparin-binding.

In terms of assembly, monomer. Expressed by the venom gland.

The protein resides in the secreted. Its activity is regulated as follows. Heparin reduces its edema-inducing activity. Functionally, snake venom phospholipase A2 homolog that lacks enzymatic activity. Shows myotoxin activities and displays edema-inducing activities. A model of myotoxic mechanism has been proposed: an apo Lys49-PLA2 is activated by the entrance of a hydrophobic molecule (e.g. fatty acid) at the hydrophobic channel of the protein leading to a reorientation of a monomer. This reorientation causes a transition between 'inactive' to 'active' states, causing alignment of C-terminal and membrane-docking sites (MDoS) side-by-side and putting the membrane-disruption sites (MDiS) in the same plane, exposed to solvent and in a symmetric position for both monomers. The MDoS region stabilizes the toxin on membrane by the interaction of charged residues with phospholipid head groups. Subsequently, the MDiS region destabilizes the membrane with penetration of hydrophobic residues. This insertion causes a disorganization of the membrane, allowing an uncontrolled influx of ions (i.e. calcium and sodium), and eventually triggering irreversible intracellular alterations and cell death. The polypeptide is Basic phospholipase A2 homolog W6D49 (Calloselasma rhodostoma (Malayan pit viper)).